A 431-amino-acid polypeptide reads, in one-letter code: Adenylosuccinate synthetase (431 aa).

GTP-binding positions include 13–19 (GDEGKGK) and 41–43 (GHT). Residue aspartate 14 is the Proton acceptor of the active site. Mg(2+) contacts are provided by aspartate 14 and glycine 41. Residues 14-17 (DEGK), 39-42 (NAGH), threonine 130, arginine 144, glutamine 225, threonine 240, and arginine 304 each bind IMP. The Proton donor role is filled by histidine 42. Position 300 to 306 (300 to 306 (ATTGRKR)) interacts with substrate. GTP contacts are provided by residues arginine 306, 332–334 (KLD), and 415–417 (STG).

It belongs to the adenylosuccinate synthetase family. In terms of assembly, homodimer. Mg(2+) is required as a cofactor.

Its subcellular location is the cytoplasm. The enzyme catalyses IMP + L-aspartate + GTP = N(6)-(1,2-dicarboxyethyl)-AMP + GDP + phosphate + 2 H(+). The protein operates within purine metabolism; AMP biosynthesis via de novo pathway; AMP from IMP: step 1/2. Its function is as follows. Plays an important role in the de novo pathway of purine nucleotide biosynthesis. Catalyzes the first committed step in the biosynthesis of AMP from IMP. This Shewanella amazonensis (strain ATCC BAA-1098 / SB2B) protein is Adenylosuccinate synthetase.